Consider the following 540-residue polypeptide: Probable ATP-dependent RNA helicase DDX28 (540 aa).

The Mitochondrial targeting signal signature appears at 3 to 18 (LTRPVRLFSLVTRLLL). Positions 126–156 (GSFADLGLEPRVLHALQEAAPEVVQPTTVQS) match the Q motif motif. Residues 159-351 (IPSLLRGRHV…NKVASPDAVT (193 aa)) form the Helicase ATP-binding domain. Residue 172-179 (AETGSGKT) coordinates ATP. Residues 180–191 (LSYLLPLLQRLL) carry the Nuclear export signal motif. A DEAD motif is present at residues 286–289 (DEAD). In terms of domain architecture, Helicase C-terminal spans 377-536 (KVAELVHILK…GLASSVKEPL (160 aa)). A Nuclear localization signal motif is present at residues 520–523 (RRRR).

The protein belongs to the DEAD box helicase family. Monomer. Found in a complex with GRSF1, DHX30, FASTKD2 and FASTKD5. Associates with the 16S mitochondrial rRNA (16S mt-rRNA) and with the mitochondrial ribosome large subunit (39S). In terms of tissue distribution, expressed in all tissues tested, including brain, placenta, lung, liver, skeletal muscle, kidney, pancreas, leukocytes, colon, small intestine, ovary and prostate.

The protein localises to the nucleus. It localises to the mitochondrion. Its subcellular location is the mitochondrion matrix. It is found in the mitochondrion nucleoid. It carries out the reaction ATP + H2O = ADP + phosphate + H(+). Functionally, plays an essential role in facilitating the proper assembly of the mitochondrial large ribosomal subunit and its helicase activity is essential for this function. May be involved in RNA processing or transport. Has RNA and Mg(2+)-dependent ATPase activity. The polypeptide is Probable ATP-dependent RNA helicase DDX28 (DDX28) (Homo sapiens (Human)).